Here is a 230-residue protein sequence, read N- to C-terminus: Large ribosomal subunit protein uL1 (230 aa).

This sequence belongs to the universal ribosomal protein uL1 family. As to quaternary structure, part of the 50S ribosomal subunit.

Its function is as follows. Binds directly to 23S rRNA. The L1 stalk is quite mobile in the ribosome, and is involved in E site tRNA release. In terms of biological role, protein L1 is also a translational repressor protein, it controls the translation of the L11 operon by binding to its mRNA. The protein is Large ribosomal subunit protein uL1 of Rhodopseudomonas palustris (strain BisB18).